The chain runs to 151 residues: Small ribosomal subunit protein uS11A (151 aa).

Residues 131 to 151 (DVTPIPSDSTRRKGGRRGRRL) form a disordered region. Over residues 142–151 (RKGGRRGRRL) the composition is skewed to basic residues.

The protein belongs to the universal ribosomal protein uS11 family.

The sequence is that of Small ribosomal subunit protein uS11A from Drosophila melanogaster (Fruit fly).